We begin with the raw amino-acid sequence, 352 residues long: Glycerol-1-phosphate dehydrogenase [NAD(P)+] (352 aa).

NAD(+)-binding positions include glycine 98–aspartate 102 and threonine 120–serine 123. Residue aspartate 125 coordinates substrate. Serine 129 provides a ligand contact to NAD(+). Aspartate 172 lines the substrate pocket. Zn(2+) is bound by residues aspartate 172 and histidine 252. Position 256 (histidine 256) interacts with substrate. Histidine 268 is a Zn(2+) binding site.

This sequence belongs to the glycerol-1-phosphate dehydrogenase family. Zn(2+) is required as a cofactor.

The protein resides in the cytoplasm. It catalyses the reaction sn-glycerol 1-phosphate + NAD(+) = dihydroxyacetone phosphate + NADH + H(+). The enzyme catalyses sn-glycerol 1-phosphate + NADP(+) = dihydroxyacetone phosphate + NADPH + H(+). Its pathway is membrane lipid metabolism; glycerophospholipid metabolism. Catalyzes the NAD(P)H-dependent reduction of dihydroxyacetonephosphate (DHAP or glycerone phosphate) to glycerol 1-phosphate (G1P). The G1P thus generated is used as the glycerophosphate backbone of phospholipids in the cellular membranes of Archaea. The chain is Glycerol-1-phosphate dehydrogenase [NAD(P)+] from Halobacterium salinarum (strain ATCC 29341 / DSM 671 / R1).